The following is a 150-amino-acid chain: MRMPEHLQRLIEPVVTGLGYELAGIEFDARARVLRVYIDHPQGIGLDDCSKVSYQLSGMLDVEDPIPGQYQLEISSPGLDRPLFTLEHFKRFTGRRVRLQTLRSLDGQRRFKGEIAGVRGDVIDLEDDNGLHAIPFDLIDKARLIPEFDI.

Belongs to the RimP family.

It is found in the cytoplasm. Its function is as follows. Required for maturation of 30S ribosomal subunits. This Methylococcus capsulatus (strain ATCC 33009 / NCIMB 11132 / Bath) protein is Ribosome maturation factor RimP.